We begin with the raw amino-acid sequence, 448 residues long: Tubulin beta chain (448 aa).

Residues glutamine 11, glutamate 69, serine 138, glycine 142, threonine 143, glycine 144, asparagine 204, and asparagine 226 each coordinate GTP. Glutamate 69 provides a ligand contact to Mg(2+). Residues 425 to 448 (YQDASISEGEEEYLEEEEPLEHEE) form a disordered region. A compositionally biased stretch (acidic residues) spans 432 to 448 (EGEEEYLEEEEPLEHEE).

The protein belongs to the tubulin family. Dimer of alpha and beta chains. A typical microtubule is a hollow water-filled tube with an outer diameter of 25 nm and an inner diameter of 15 nM. Alpha-beta heterodimers associate head-to-tail to form protofilaments running lengthwise along the microtubule wall with the beta-tubulin subunit facing the microtubule plus end conferring a structural polarity. Microtubules usually have 13 protofilaments but different protofilament numbers can be found in some organisms and specialized cells. The cofactor is Mg(2+).

It is found in the cytoplasm. Its subcellular location is the cytoskeleton. In terms of biological role, tubulin is the major constituent of microtubules, a cylinder consisting of laterally associated linear protofilaments composed of alpha- and beta-tubulin heterodimers. Microtubules grow by the addition of GTP-tubulin dimers to the microtubule end, where a stabilizing cap forms. Below the cap, tubulin dimers are in GDP-bound state, owing to GTPase activity of alpha-tubulin. The protein is Tubulin beta chain (benR) of Aspergillus parasiticus.